Reading from the N-terminus, the 104-residue chain is Large ribosomal subunit protein bL21 (104 aa).

The protein belongs to the bacterial ribosomal protein bL21 family. Part of the 50S ribosomal subunit. Contacts protein L20.

Its function is as follows. This protein binds to 23S rRNA in the presence of protein L20. This is Large ribosomal subunit protein bL21 from Streptococcus sanguinis (strain SK36).